Here is a 186-residue protein sequence, read N- to C-terminus: Ribosome-recycling factor (186 aa).

Belongs to the RRF family.

The protein resides in the cytoplasm. Functionally, responsible for the release of ribosomes from messenger RNA at the termination of protein biosynthesis. May increase the efficiency of translation by recycling ribosomes from one round of translation to another. This is Ribosome-recycling factor from Nitratidesulfovibrio vulgaris (strain DP4) (Desulfovibrio vulgaris).